Here is a 534-residue protein sequence, read N- to C-terminus: MLGEMWSFNGRYKILHMTWFAFFLSFVVWFNFPPFATTIAQDFGLDKAQLGTIGLCNVALTVPARIIIGMLLDKYGPRLTYSLLLIYAAVPCLIFATAQSFNQLVLGRLLMGIVGAGFVIGIRMVAEWFPPKDVGTAEGIYGGWGNFGSAFSAFTMVIFGIILAFLPGAFNFGQPESFKILFFPEFNTAILNWRAAIAGTGIIAALYGMLYYFSVSDTPPGKTYHRPKSARGMEVTTKKDFWFLLAMNLPLTLILMVLAWRLQKVNFLNGTGFAIAILALVGLYLFQTYNCWTVNKDLMTGKKRYAPEDRYEFSQVAILELTYIVNFGSELAVVTMLPAFFEGTFSLDKATAGIIASSYAFMNLMSRPGGGLISDKMGSRKWTMVVLTVGMGVGYLLMSSVAGTWPLAIAVLLTMACSFFVQAAEGSTFAIVPLVKRRITGQIAGNVGAYGNVGAVAYLTVLLLLTEASAGANGGEPVMATVNAGFFQVLGITGLIVAFLCAFFLKEPKGSFAEFHEGETEMTATPPIEEEATY.

12 helical membrane passes run 19-39, 52-72, 79-99, 109-129, 150-170, 195-215, 240-260, 266-286, 382-404, 409-431, 445-465, and 485-505; these read WFAF…ATTI, TIGL…GMLL, LTYS…ATAQ, LLMG…AEWF, AFSA…PGAF, AAIA…YFSV, DFWF…VLAW, NFLN…LYLF, WTMV…VAGT, IAVL…TFAI, GNVG…LLLL, and GFFQ…AFFL.

The protein belongs to the major facilitator superfamily. Nitrate/nitrite porter (TC 2.A.1.8) family.

It is found in the cell inner membrane. In terms of biological role, high-efficiency transport system for both nitrate and nitrite. The polypeptide is Nitrate/nitrite transporter NrtP (Picosynechococcus sp. (strain ATCC 27264 / PCC 7002 / PR-6) (Agmenellum quadruplicatum)).